We begin with the raw amino-acid sequence, 350 residues long: Arginine N-succinyltransferase (350 aa).

Leu-125 serves as a coordination point for succinyl-CoA. His-229 serves as the catalytic Proton donor.

The protein belongs to the arginine N-succinyltransferase family.

The catalysed reaction is succinyl-CoA + L-arginine = N(2)-succinyl-L-arginine + CoA + H(+). It functions in the pathway amino-acid degradation; L-arginine degradation via AST pathway; L-glutamate and succinate from L-arginine: step 1/5. In terms of biological role, catalyzes the transfer of succinyl-CoA to arginine to produce N(2)-succinylarginine. The protein is Arginine N-succinyltransferase of Yersinia pseudotuberculosis serotype O:3 (strain YPIII).